A 341-amino-acid polypeptide reads, in one-letter code: NADH-quinone oxidoreductase subunit H 1 (341 aa).

9 helical membrane passes run 7-27, 46-66, 80-100, 111-131, 157-177, 183-203, 244-264, 273-293, and 305-325; these read IILT…ISLL, PNVV…KYIF, FFLA…VIPF, VAIL…IMGG, LGLI…SHIV, AFGL…LFFI, YIAI…GWLS, VFWM…VKAI, and IGWK…AFLA.

This sequence belongs to the complex I subunit 1 family. As to quaternary structure, NDH-1 is composed of 14 different subunits. Subunits NuoA, H, J, K, L, M, N constitute the membrane sector of the complex.

It is found in the cell inner membrane. The enzyme catalyses a quinone + NADH + 5 H(+)(in) = a quinol + NAD(+) + 4 H(+)(out). Functionally, NDH-1 shuttles electrons from NADH, via FMN and iron-sulfur (Fe-S) centers, to quinones in the respiratory chain. The immediate electron acceptor for the enzyme in this species is believed to be ubiquinone. Couples the redox reaction to proton translocation (for every two electrons transferred, four hydrogen ions are translocated across the cytoplasmic membrane), and thus conserves the redox energy in a proton gradient. This subunit may bind ubiquinone. In Cereibacter sphaeroides (strain ATCC 17029 / ATH 2.4.9) (Rhodobacter sphaeroides), this protein is NADH-quinone oxidoreductase subunit H 1.